Reading from the N-terminus, the 165-residue chain is Endoribonuclease YbeY (165 aa).

The Zn(2+) site is built by H130, H134, and H140.

Belongs to the endoribonuclease YbeY family. The cofactor is Zn(2+).

It is found in the cytoplasm. Functionally, single strand-specific metallo-endoribonuclease involved in late-stage 70S ribosome quality control and in maturation of the 3' terminus of the 16S rRNA. This is Endoribonuclease YbeY from Streptococcus pneumoniae serotype 2 (strain D39 / NCTC 7466).